A 78-amino-acid polypeptide reads, in one-letter code: U7-lycotoxin-Ls1a (78 aa).

An N-terminal signal peptide occupies residues 1 to 22 (MKLIIFTGLALLLIVSLIDVEA). Positions 23 to 26 (QNEG) are excised as a propeptide.

The protein belongs to the neurotoxin 19 (CSTX) family. 07 (U7-Lctx) subfamily. In terms of processing, contains 4 disulfide bonds. As to expression, expressed by the venom gland.

It is found in the secreted. The sequence is that of U7-lycotoxin-Ls1a from Lycosa singoriensis (Wolf spider).